Reading from the N-terminus, the 297-residue chain is Aspartate dehydrogenase domain-containing protein (297 aa).

Phosphoserine occurs at positions 24 and 172.

The protein belongs to the L-aspartate dehydrogenase family.

This Rattus norvegicus (Rat) protein is Aspartate dehydrogenase domain-containing protein.